A 340-amino-acid chain; its full sequence is Photosystem II assembly lipoprotein Ycf48 (340 aa).

Residues 1-26 (MTSVLGLLKPLKKAIAAIAVLVLCIG) form the signal peptide. C27 carries N-palmitoyl cysteine lipidation. C27 is lipidated: S-diacylglycerol cysteine.

Belongs to the Ycf48 family. As to quaternary structure, part of early PSII assembly complexes which includes D1 (psbA) and PsbI; not found in mature PSII. Binds to the lumenal side of PSII complexes. Interacts with YidC.

The protein resides in the cellular thylakoid membrane. Functionally, a factor required for optimal assembly of photosystem II (PSII), acting in the early stages of PSII assembly. Also plays a role in replacement of photodamaged D1 (psbA). Assists YidC in synthesis of chlorophyll-binding proteins. This chain is Photosystem II assembly lipoprotein Ycf48, found in Picosynechococcus sp. (strain ATCC 27264 / PCC 7002 / PR-6) (Agmenellum quadruplicatum).